A 1409-amino-acid polypeptide reads, in one-letter code: DNA-directed RNA polymerase subunit beta' (1409 aa).

Positions 70, 72, 85, and 88 each coordinate Zn(2+). The Mg(2+) site is built by D458, D460, and D462. Residues C813, C887, C894, and C897 each contribute to the Zn(2+) site.

Belongs to the RNA polymerase beta' chain family. As to quaternary structure, the RNAP catalytic core consists of 2 alpha, 1 beta, 1 beta' and 1 omega subunit. When a sigma factor is associated with the core the holoenzyme is formed, which can initiate transcription. Mg(2+) serves as cofactor. Requires Zn(2+) as cofactor.

It catalyses the reaction RNA(n) + a ribonucleoside 5'-triphosphate = RNA(n+1) + diphosphate. Functionally, DNA-dependent RNA polymerase catalyzes the transcription of DNA into RNA using the four ribonucleoside triphosphates as substrates. In Delftia acidovorans (strain DSM 14801 / SPH-1), this protein is DNA-directed RNA polymerase subunit beta'.